The primary structure comprises 133 residues: MAKEFGRPQRVAQEMQKEIALILQREIKDPRLGMMTTVSGVEMSRDLAYAKVYVTFLNDKDEDAVKAGIKALQEASGFIRSLLGKAMRLRIVPELTFFYDNSLVEGMRMSNLVTSVVKHDEERRVNPDDSKED.

It belongs to the RbfA family. Monomer. Binds 30S ribosomal subunits, but not 50S ribosomal subunits or 70S ribosomes.

Its subcellular location is the cytoplasm. In terms of biological role, one of several proteins that assist in the late maturation steps of the functional core of the 30S ribosomal subunit. Associates with free 30S ribosomal subunits (but not with 30S subunits that are part of 70S ribosomes or polysomes). Required for efficient processing of 16S rRNA. May interact with the 5'-terminal helix region of 16S rRNA. The chain is Ribosome-binding factor A from Shigella boydii serotype 18 (strain CDC 3083-94 / BS512).